The chain runs to 153 residues: Aspartate carbamoyltransferase regulatory chain (153 aa).

Zn(2+) is bound by residues Cys109, Cys114, Cys138, and Cys141.

This sequence belongs to the PyrI family. Contains catalytic and regulatory chains. Zn(2+) serves as cofactor.

Involved in allosteric regulation of aspartate carbamoyltransferase. This Salmonella schwarzengrund (strain CVM19633) protein is Aspartate carbamoyltransferase regulatory chain.